The primary structure comprises 106 residues: Large ribosomal subunit protein eL42 (106 aa).

It belongs to the eukaryotic ribosomal protein eL42 family.

This is Large ribosomal subunit protein eL42 (RPL44) from Eremothecium gossypii (strain ATCC 10895 / CBS 109.51 / FGSC 9923 / NRRL Y-1056) (Yeast).